The following is a 70-amino-acid chain: Cytochrome c oxidase subunit 8B, mitochondrial (70 aa).

The N-terminal 24 residues, 1-24, are a transit peptide targeting the mitochondrion; it reads MSRLAPPLRLLQAPLKCWAVPKAH. Over 25-35 the chain is Mitochondrial matrix; sequence VSAKPARTPTS. Residues 36 to 59 form a helical membrane-spanning segment; that stretch reads PMEQAVGLSVMFVSFLVPSGWVLS. The Mitochondrial intermembrane segment spans residues 60 to 70; it reads HLESYKKSSTT.

Belongs to the cytochrome c oxidase VIII family. As to quaternary structure, component of the cytochrome c oxidase (complex IV, CIV), a multisubunit enzyme composed of 14 subunits. The complex is composed of a catalytic core of 3 subunits MT-CO1, MT-CO2 and MT-CO3, encoded in the mitochondrial DNA, and 11 supernumerary subunits COX4I, COX5A, COX5B, COX6A, COX6B, COX6C, COX7A, COX7B, COX7C, COX8 and NDUFA4, which are encoded in the nuclear genome. The complex exists as a monomer or a dimer and forms supercomplexes (SCs) in the inner mitochondrial membrane with NADH-ubiquinone oxidoreductase (complex I, CI) and ubiquinol-cytochrome c oxidoreductase (cytochrome b-c1 complex, complex III, CIII), resulting in different assemblies (supercomplex SCI(1)III(2)IV(1) and megacomplex MCI(2)III(2)IV(2)).

The protein localises to the mitochondrion inner membrane. It functions in the pathway energy metabolism; oxidative phosphorylation. Component of the cytochrome c oxidase, the last enzyme in the mitochondrial electron transport chain which drives oxidative phosphorylation. The respiratory chain contains 3 multisubunit complexes succinate dehydrogenase (complex II, CII), ubiquinol-cytochrome c oxidoreductase (cytochrome b-c1 complex, complex III, CIII) and cytochrome c oxidase (complex IV, CIV), that cooperate to transfer electrons derived from NADH and succinate to molecular oxygen, creating an electrochemical gradient over the inner membrane that drives transmembrane transport and the ATP synthase. Cytochrome c oxidase is the component of the respiratory chain that catalyzes the reduction of oxygen to water. Electrons originating from reduced cytochrome c in the intermembrane space (IMS) are transferred via the dinuclear copper A center (CU(A)) of subunit 2 and heme A of subunit 1 to the active site in subunit 1, a binuclear center (BNC) formed by heme A3 and copper B (CU(B)). The BNC reduces molecular oxygen to 2 water molecules using 4 electrons from cytochrome c in the IMS and 4 protons from the mitochondrial matrix. This Carlito syrichta (Philippine tarsier) protein is Cytochrome c oxidase subunit 8B, mitochondrial (COX8B).